Consider the following 979-residue polypeptide: MHC class II regulatory factor RFX1 (979 aa).

3 disordered regions span residues 1-136 (MATQ…QVVQ), 181-227 (QSAA…PTGT), and 370-405 (TSTG…STGG). Residues 12–44 (APPPSQPPQAPPQAQPQPPPPPPPAAPQPPQPP) are compositionally biased toward pro residues. Residues 45-73 (TAAATPQPQYVTELQSPQPQAQPPGGQKQ) are compositionally biased toward low complexity. Residue serine 60 is modified to Phosphoserine. Residues 81–96 (VPAPSQPTGAPTPSPA) show a composition bias toward pro residues. The span at 114–126 (ETVSEASPGSTAS) shows a compositional bias: polar residues. Low complexity predominate over residues 127-136 (QTGVPTQVVQ). Polar residues-rich tracts occupy residues 190–203 (GQVS…QQVH) and 209–220 (SPVQANSSSSKT). The span at 370–379 (TSTGAGASNS) shows a compositional bias: low complexity. A compositionally biased stretch (gly residues) spans 380–405 (SGGGGSGGGGGGGGGGGGGGSGSTGG). A DNA-binding region (RFX-type winged-helix) is located at residues 438–513 (TVQWLLDNYE…YHYYGLRIKA (76 aa)). Residues 744–979 (FAQTLRRYTS…GLFVQALPSS (236 aa)) are necessary for dimerization. Positions 915–960 (SLNPLDPDKDEEEEEEEESEDELPQDISLAAGGESPALGPETLEPP) are disordered. A compositionally biased stretch (acidic residues) spans 922-938 (DKDEEEEEEEESEDELP). Residues serine 978 and serine 979 each carry the phosphoserine modification.

Belongs to the RFX family. Homodimer; binds DNA as a homodimer. Heterodimer; heterodimerizes with RFX2 and RFX3.

It localises to the nucleus. Functionally, regulatory factor essential for MHC class II genes expression. Binds to the X boxes of MHC class II genes. Also binds to an inverted repeat (ENH1) required for hepatitis B virus genes expression and to the most upstream element (alpha) of the RPL30 promoter. The sequence is that of MHC class II regulatory factor RFX1 (RFX1) from Homo sapiens (Human).